The sequence spans 663 residues: Rho GTPase-activating protein 18 (663 aa).

The interval 15 to 37 is disordered; sequence YHPSGKDQTVGNSHAKAGEEATS. Phosphoserine occurs at positions 66 and 69. Thr158 is modified (phosphothreonine). 2 disordered regions span residues 179 to 227 and 243 to 277; these read RESK…PAPE and QKESSKEKIQKSKGDDATLPSFRLPKDKTGTTRIG. 2 stretches are compositionally biased toward basic and acidic residues: residues 197 to 219 and 245 to 258; these read NENKYQGRDDEASNLVGEEKLIP and ESSKEKIQKSKGDD. Ser263 carries the post-translational modification Phosphoserine. Residues 324–523 form the Rho-GAP domain; that stretch reads VPLTALLEQD…LLIKYQKLLW (200 aa). Ser610 is modified (phosphoserine).

Interacts with MPHOSPH6.

Its subcellular location is the cytoplasm. In terms of biological role, rho GTPase activating protein that suppresses F-actin polymerization by inhibiting Rho. Rho GTPase activating proteins act by converting Rho-type GTPases to an inactive GDP-bound state. Plays a key role in tissue tension and 3D tissue shape by regulating cortical actomyosin network formation. Acts downstream of YAP1 and inhibits actin polymerization, which in turn reduces nuclear localization of YAP1. Regulates cell shape, spreading, and migration. This chain is Rho GTPase-activating protein 18, found in Homo sapiens (Human).